The chain runs to 469 residues: MSRTFYDKLWDDHVIYSEEDGTATIYIDRQLLHEVTSPQAFEGLNLAGRPVWRISANLAVSDHNVPTTDRSEGITDPISKLQVDTLDQNCDAFGITQYKMNDTRQGIVHVIGPEQGATLPGMTVVCGDSHTSTHGAFGALAFGIGTSEVEHVLATQTLLMKKSKNMLVKVDGRLQPGSTAKDIVLAVIGKIGTAGGTGYTIEFAGEAIRNLSMEGRMTLCNMAIEAGARASLVAVDETTIEYIQGRPYAPKGAAMLQALQYWRTLHSDPDAKFDAVVELRAEEIAPQVTWGTSPEMVLAISDRVPDPEKERDSNKRSAMERALQYMNLNPNTPISSIAVDKVFIGSCTNSRIEDIRAAAKVIDRLGKKVAANVKLALVVPGSGLVKAQAEREGLDRIFKAAGFEWREPGCSMCLAMNADRLEPGERCASTSNRNFEGRQGNGGRTHLVSPAMAAAAAIEGHFVDVRKIS.

[4Fe-4S] cluster-binding residues include cysteine 347, cysteine 410, and cysteine 413.

Belongs to the aconitase/IPM isomerase family. LeuC type 1 subfamily. As to quaternary structure, heterodimer of LeuC and LeuD. [4Fe-4S] cluster serves as cofactor.

The enzyme catalyses (2R,3S)-3-isopropylmalate = (2S)-2-isopropylmalate. Its pathway is amino-acid biosynthesis; L-leucine biosynthesis; L-leucine from 3-methyl-2-oxobutanoate: step 2/4. Catalyzes the isomerization between 2-isopropylmalate and 3-isopropylmalate, via the formation of 2-isopropylmaleate. This is 3-isopropylmalate dehydratase large subunit from Polynucleobacter necessarius subsp. necessarius (strain STIR1).